The following is a 299-amino-acid chain: Prohibitin-2 (299 aa).

Ala2 is subject to N-acetylalanine. The tract at residues 19 to 49 (MGTALKLLLGAGAVAYGVRESVFTVEGGHRA) is necessary for transcriptional repression. Residue Tyr128 is modified to Phosphotyrosine. Residue Lys147 is modified to N6-acetyllysine. Residues 150–174 (ASQLITQRAQVSLLIRRELTERAKD) form a necessary for transcriptional repression region. Ser151 is subject to Phosphoserine. Positions 190-238 (SREYTAAVEAKQVAQQEAQRAQFLVEKAKQEQRQKIVQAEGEAEAAKML) form a coiled coil. Residues Lys200, Lys236, Lys250, and Lys262 each carry the N6-acetyllysine modification.

It belongs to the prohibitin family. As to quaternary structure, the mitochondrial prohibitin complex consists of two subunits (PHB1 and PHB2), assembled into a membrane-associated ring-shaped supercomplex of approximately 1 mDa. Interacts with ESR1, HDAC1 and HDAC5. Interacts with ZNF703. Interacts with STOML2. Interacts with ARFGEF3. Interacts with SPHK2. Interacts with COX4I1; the interaction associates PHB2 with COX. Interacts with MAP1LC3B (membrane-bound form LC3-II); the interaction is direct and upon mitochondrial depolarization and proteasome-dependent outer membrane rupture. Interacts with IGFBP6 (via C-terminal domain). Interacts with CLPB. Interacts with CD86 (via cytoplasmic domain); the interactions increases after priming with CD40. Interacts with AFG3L2. Interacts with DNAJC19. Interacts with AKT2; this interaction may be important for myogenic differentiation. Post-translationally, phosphorylated. Tyrosine phosphorylation is indirectly stimulated by IGFBP6.

Its subcellular location is the mitochondrion inner membrane. It localises to the cytoplasm. The protein localises to the nucleus. The protein resides in the cell membrane. Its function is as follows. Protein with pleiotropic attributes mediated in a cell-compartment- and tissue-specific manner, which include the plasma membrane-associated cell signaling functions, mitochondrial chaperone, and transcriptional co-regulator of transcription factors and sex steroid hormones in the nucleus. In terms of biological role, in the mitochondria, together with PHB, forms large ring complexes (prohibitin complexes) in the inner mitochondrial membrane (IMM) and functions as a chaperone protein that stabilizes mitochondrial respiratory enzymes and maintains mitochondrial integrity in the IMM, which is required for mitochondrial morphogenesis, neuronal survival, and normal lifespan. The prohibitin complex, with DNAJC19, regulates cardiolipin remodeling and the protein turnover of OMA1 in a cardiolipin-binding manner. Also regulates cytochrome-c oxidase assembly (COX) and mitochondrial respiration. Binding to sphingoid 1-phosphate (SPP) modulates its regulator activity. Has a key role of mitophagy receptor involved in targeting mitochondria for autophagic degradation. Involved in mitochondrial-mediated antiviral innate immunity, activates RIG-I-mediated signal transduction and production of IFNB1 and pro-inflammatory cytokine IL6. In the nucleus, serves as transcriptional co-regulator. Acts as a mediator of transcriptional repression by nuclear hormone receptors via recruitment of histone deacetylases. Functions as an estrogen receptor (ER)-selective coregulator that potentiates the inhibitory activities of antiestrogens and represses the activity of estrogens. Competes with NCOA1 for modulation of ER transcriptional activity. Functionally, in the plasma membrane, is involved in IGFBP6-induced cell migration. Cooperates with CD86 to mediate CD86-signaling in B lymphocytes that regulates the level of IgG1 produced through the activation of distal signaling intermediates. Upon CD40 engagement, required to activate NF-kappa-B signaling pathway via phospholipase C and protein kinase C activation. This chain is Prohibitin-2, found in Rattus norvegicus (Rat).